The chain runs to 289 residues: MAGAKEVKTKIKSVQNTQKITSAMEMVAASKMRRAQERMEATRPYAEKIRQVIGHLGHANPDYRHPFLVERDEVKRVGYIVVSTDRGLCGGLNVNLFKAAINDLKGWQEQGVGAQVVPIGAKGIGFFERTGVEIPAEVRDIGDRPKLEQMIGPIKVLLDAYVDGTIDRVNLVSNQFVNTMTQRPQVQRLIPVEPVREEEMLENWDYIYEPDAASLLDDVLRRYVESQVYQGVVENIACEMAARMIAMKSASDNAAEIIDDLQITYNKARQAAITQELTEIVSGAEAVSG.

It belongs to the ATPase gamma chain family. In terms of assembly, F-type ATPases have 2 components, CF(1) - the catalytic core - and CF(0) - the membrane proton channel. CF(1) has five subunits: alpha(3), beta(3), gamma(1), delta(1), epsilon(1). CF(0) has three main subunits: a, b and c.

Its subcellular location is the cell inner membrane. Its function is as follows. Produces ATP from ADP in the presence of a proton gradient across the membrane. The gamma chain is believed to be important in regulating ATPase activity and the flow of protons through the CF(0) complex. This chain is ATP synthase gamma chain, found in Halorhodospira halophila (strain DSM 244 / SL1) (Ectothiorhodospira halophila (strain DSM 244 / SL1)).